Reading from the N-terminus, the 504-residue chain is Anaerobic nitric oxide reductase transcription regulator NorR (504 aa).

Residue D57 is modified to 4-aspartylphosphate. One can recognise a Sigma-54 factor interaction domain in the interval 187–416; that stretch reads MIGLSPGMTQ…LEHAIHRAVV (230 aa). Residues 215 to 222 and 278 to 287 contribute to the ATP site; these read GETGTGKE and ADNGTLFLDE. A DNA-binding region (H-T-H motif) is located at residues 479-498; the sequence is WAACARMLETDVANLHRLAK.

It participates in nitrogen metabolism; nitric oxide reduction. In terms of biological role, required for the expression of anaerobic nitric oxide (NO) reductase, acts as a transcriptional activator for at least the norVW operon. Activation also requires sigma-54. The protein is Anaerobic nitric oxide reductase transcription regulator NorR of Escherichia coli (strain 55989 / EAEC).